A 629-amino-acid polypeptide reads, in one-letter code: tRNA uridine 5-carboxymethylaminomethyl modification enzyme MnmG (629 aa).

Residues 13–18 (GGGHAG), Val-125, and Ser-180 contribute to the FAD site. 273 to 287 (GPRYCPSIEDKVMRF) serves as a coordination point for NAD(+). Gln-370 serves as a coordination point for FAD.

It belongs to the MnmG family. As to quaternary structure, homodimer. Heterotetramer of two MnmE and two MnmG subunits. FAD serves as cofactor.

The protein resides in the cytoplasm. Functionally, NAD-binding protein involved in the addition of a carboxymethylaminomethyl (cmnm) group at the wobble position (U34) of certain tRNAs, forming tRNA-cmnm(5)s(2)U34. The protein is tRNA uridine 5-carboxymethylaminomethyl modification enzyme MnmG of Photobacterium profundum (strain SS9).